Here is a 148-residue protein sequence, read N- to C-terminus: MAIANNKKAFHDFFIEDRIEAGLVLEGWEVKAIRAARVQLKESYIYWKKDAFYLVGCHITALPTASTHIKPDAVRPRKLLLKQSEINKLIGKTERAGYTIVPLDLHFSRGKIKMEIGLAKGKKQHDKRQSMKEADWKREKQRLIKHTR.

The disordered stretch occupies residues 119–148; the sequence is AKGKKQHDKRQSMKEADWKREKQRLIKHTR. Residues 127 to 142 are compositionally biased toward basic and acidic residues; the sequence is KRQSMKEADWKREKQR.

Belongs to the SmpB family.

Its subcellular location is the cytoplasm. In terms of biological role, required for rescue of stalled ribosomes mediated by trans-translation. Binds to transfer-messenger RNA (tmRNA), required for stable association of tmRNA with ribosomes. tmRNA and SmpB together mimic tRNA shape, replacing the anticodon stem-loop with SmpB. tmRNA is encoded by the ssrA gene; the 2 termini fold to resemble tRNA(Ala) and it encodes a 'tag peptide', a short internal open reading frame. During trans-translation Ala-aminoacylated tmRNA acts like a tRNA, entering the A-site of stalled ribosomes, displacing the stalled mRNA. The ribosome then switches to translate the ORF on the tmRNA; the nascent peptide is terminated with the 'tag peptide' encoded by the tmRNA and targeted for degradation. The ribosome is freed to recommence translation, which seems to be the essential function of trans-translation. This is SsrA-binding protein from Neisseria gonorrhoeae (strain ATCC 700825 / FA 1090).